Consider the following 248-residue polypeptide: Mannose-binding protein C (248 aa).

An N-terminal signal peptide occupies residues 1–20 (MSLFPSLPLLLLSMVAASYS). In terms of domain architecture, Collagen-like spans 42-99 (GINGFPGKDGRDGTKGEKGEPGQGLRGLQGPPGKLGPPGNPGPSGSPGPKGQKGDPGK). The interval 43 to 113 (INGFPGKDGR…DSSLAASERK (71 aa)) is disordered. Pro-47 carries the 4-hydroxyproline modification. Basic and acidic residues predominate over residues 49–61 (KDGRDGTKGEKGE). Residues Pro-73, Pro-79, Pro-82, and Pro-88 each carry the 4-hydroxyproline modification. Positions 75-87 (KLGPPGNPGPSGS) are enriched in pro residues. Residues 93–102 (QKGDPGKSPD) are compositionally biased toward basic and acidic residues. Residues 112–130 (RKALQTEMARIKKWLTFSL) adopt a coiled-coil conformation. In terms of domain architecture, C-type lectin spans 134–245 (VGNKFFLTNG…CSTSHLAVCE (112 aa)). Cystine bridges form between Cys-155-Cys-244 and Cys-222-Cys-236.

As to quaternary structure, oligomeric complex of 3 or more homotrimers. Interacts with MASP1 and MASP2. Interacts with MEP1A and MEP1B and may inhibit their catalytic activity. Post-translationally, hydroxylation on proline residues within the sequence motif, GXPG, is most likely to be 4-hydroxy as this fits the requirement for 4-hydroxylation in vertebrates.

It is found in the secreted. In terms of biological role, calcium-dependent lectin involved in innate immune defense. Binds mannose, fucose and N-acetylglucosamine on different microorganisms and activates the lectin complement pathway. Binds to late apoptotic cells, as well as to apoptotic blebs and to necrotic cells, but not to early apoptotic cells, facilitating their uptake by macrophages. The sequence is that of Mannose-binding protein C (MBL2) from Gorilla gorilla gorilla (Western lowland gorilla).